The following is a 513-amino-acid chain: Serine/threonine-protein phosphatase T (513 aa).

3 TPR repeats span residues 12–45 (ALERKNEGNVFVKEKHFLKAIEKYTEAIDLDSTQ), 46–79 (SIYFSNRAFAHFKVDNFQSALNDCDEAIKLDPKN), and 80–113 (IKAYHRRALSCMALLEFKKARKDLNVLLKAKPND). A catalytic region spans residues 188–513 (KNMSQEFISK…MAYSNGGFGL (326 aa)). Residues D249, H251, D278, and N310 each contribute to the Mn(2+) site. H311 functions as the Proton donor/acceptor in the catalytic mechanism. Residues H359 and H434 each contribute to the Mn(2+) site.

It belongs to the PPP phosphatase family. PP-5 (PP-T) subfamily. Interacts (via TPR repeats) with HSP82 (via C-terminal MEEVD pentapeptide). Mg(2+) is required as a cofactor. Requires Mn(2+) as cofactor.

Its subcellular location is the nucleus. The catalysed reaction is O-phospho-L-seryl-[protein] + H2O = L-seryl-[protein] + phosphate. The enzyme catalyses O-phospho-L-threonyl-[protein] + H2O = L-threonyl-[protein] + phosphate. Stimulated by arachidonic acid and other unsaturated fatty acids, and by arachidoyl coenzyme A. Its function is as follows. Protein phosphatase that specifically binds to and dephosphorylates the molecular chaperone Hsp90 (HSC82 and HSP82). Dephosphorylation positively regulates the Hsp90 chaperone machinery. The protein is Serine/threonine-protein phosphatase T (PPT1) of Saccharomyces cerevisiae (strain ATCC 204508 / S288c) (Baker's yeast).